We begin with the raw amino-acid sequence, 757 residues long: Exo-alpha-(1-&gt;6)-L-arabinopyranosidase (757 aa).

The active site involves D232.

The protein belongs to the glycosyl hydrolase 3 family. As to quaternary structure, homotetramer.

Its activity is regulated as follows. Completely inhibited by Cu(2+) and Fe(2+). In terms of biological role, catalyzes the hydrolysis of a non-reducing terminal alpha-L-arabinopyranosidic linkage in ginsenoside Rb2 (alpha-L-arabinopyranosyl-(1-&gt;6)-alpha-D-glucopyranosyl) to release alpha-D-glucopyranosyl (Rd). It is not able to hydrolyze alpha-L-arabinofuranosyl-(1-&gt;6)-alpha-D-glucopyranosyl (Rc). This is Exo-alpha-(1-&gt;6)-L-arabinopyranosidase from Bifidobacterium breve (strain ACS-071-V-Sch8b).